Here is an 871-residue protein sequence, read N- to C-terminus: Alanine--tRNA ligase (871 aa).

The Zn(2+) site is built by His-561, His-565, Cys-665, and His-669.

Belongs to the class-II aminoacyl-tRNA synthetase family. Zn(2+) is required as a cofactor.

It localises to the cytoplasm. The enzyme catalyses tRNA(Ala) + L-alanine + ATP = L-alanyl-tRNA(Ala) + AMP + diphosphate. Functionally, catalyzes the attachment of alanine to tRNA(Ala) in a two-step reaction: alanine is first activated by ATP to form Ala-AMP and then transferred to the acceptor end of tRNA(Ala). Also edits incorrectly charged Ser-tRNA(Ala) and Gly-tRNA(Ala) via its editing domain. The chain is Alanine--tRNA ligase from Dehalococcoides mccartyi (strain CBDB1).